Reading from the N-terminus, the 509-residue chain is Dihydrolipoyl dehydrogenase, mitochondrial (509 aa).

Residues 1 to 35 constitute a mitochondrion transit peptide; the sequence is MQSWSRVYCSLVKRGHFSRISHGLQGVSVVPLRTY. Position 66 is an N6-acetyllysine; alternate (Lys66). The residue at position 66 (Lys66) is an N6-succinyllysine; alternate. FAD-binding positions include 71–80 and Lys89; that span reads EKNETLGGTC. A disulfide bond links Cys80 and Cys85. An N6-acetyllysine; alternate mark is found at Lys104, Lys122, Lys132, and Lys143. Lys104, Lys122, Lys132, and Lys143 each carry N6-succinyllysine; alternate. An FAD-binding site is contributed by Gly154. Residues Lys159 and Lys166 each carry the N6-succinyllysine modification. 183–185 contributes to the FAD binding site; that stretch reads TGS. NAD(+) contacts are provided by residues 220-227 and Glu243; that span reads GAGVIGVE. Residues Lys273 and Lys277 each carry the N6-succinyllysine modification. Val278 provides a ligand contact to NAD(+). Ser285 and Ser297 each carry phosphoserine. An NAD(+)-binding site is contributed by Gly314. Residue Lys346 is modified to N6-acetyllysine. FAD is bound by residues Asp355 and 361–364; that span reads MLAH. Lys410 bears the N6-acetyllysine; alternate mark. Lys410 is modified (N6-succinyllysine; alternate). Residues Lys417 and Lys420 each carry the N6-acetyllysine modification. Position 430 is an N6-succinyllysine (Lys430). His487 acts as the Proton acceptor in catalysis. Lys505 is modified (N6-acetyllysine; alternate). Lys505 carries the post-translational modification N6-succinyllysine; alternate.

The protein belongs to the class-I pyridine nucleotide-disulfide oxidoreductase family. Homodimer. Part of the multimeric pyruvate dehydrogenase complex that contains multiple copies of pyruvate dehydrogenase (subunits PDHA (PDHA1 or PDHA2) and PDHB, E1), dihydrolipoamide acetyltransferase (DLAT, E2) and lipoamide dehydrogenase (DLD, E3). These subunits are bound to an inner core composed of about 48 DLAT and 12 PDHX molecules (by non covalent bonds). The 2-oxoglutarate dehydrogenase complex is composed of OGDH (2-oxoglutarate dehydrogenase; E1), DLST (dihydrolipoamide succinyltransferase; E2), DLD (dihydrolipoamide dehydrogenase; E3) and the assembly factor KGD4. It contains multiple copies of the three enzymatic components (E1, E2 and E3). In the nucleus, the 2-oxoglutarate dehydrogenase complex associates with KAT2A. Interacts with PDHX. The cofactor is FAD. In terms of processing, tyrosine phosphorylated.

Its subcellular location is the mitochondrion matrix. The protein localises to the nucleus. The protein resides in the cell projection. It localises to the cilium. It is found in the flagellum. Its subcellular location is the cytoplasmic vesicle. The protein localises to the secretory vesicle. The protein resides in the acrosome. The catalysed reaction is N(6)-[(R)-dihydrolipoyl]-L-lysyl-[protein] + NAD(+) = N(6)-[(R)-lipoyl]-L-lysyl-[protein] + NADH + H(+). Lipoamide dehydrogenase is a component of the glycine cleavage system as well as an E3 component of three alpha-ketoacid dehydrogenase complexes (pyruvate-, alpha-ketoglutarate-, and branched-chain amino acid-dehydrogenase complex). The 2-oxoglutarate dehydrogenase complex is mainly active in the mitochondrion. A fraction of the 2-oxoglutarate dehydrogenase complex also localizes in the nucleus and is required for lysine succinylation of histones: associates with KAT2A on chromatin and provides succinyl-CoA to histone succinyltransferase KAT2A. In monomeric form may have additional moonlighting function as serine protease. Involved in the hyperactivation of spermatazoa during capacitation and in the spermatazoal acrosome reaction. In Bos taurus (Bovine), this protein is Dihydrolipoyl dehydrogenase, mitochondrial (DLD).